We begin with the raw amino-acid sequence, 155 residues long: Ribonuclease H (155 aa).

Positions 1–142 (MLKQVEIFTD…CDELARNAAG (142 aa)) constitute an RNase H type-1 domain. Positions 10, 48, 70, and 134 each coordinate Mg(2+).

Belongs to the RNase H family. Monomer. It depends on Mg(2+) as a cofactor.

Its subcellular location is the cytoplasm. It carries out the reaction Endonucleolytic cleavage to 5'-phosphomonoester.. In terms of biological role, endonuclease that specifically degrades the RNA of RNA-DNA hybrids. This chain is Ribonuclease H, found in Erwinia tasmaniensis (strain DSM 17950 / CFBP 7177 / CIP 109463 / NCPPB 4357 / Et1/99).